We begin with the raw amino-acid sequence, 206 residues long: 2,3-bisphosphoglycerate-dependent phosphoglycerate mutase (206 aa).

Residues 9–16, 22–23, Arg-61, 88–91, Lys-99, 115–116, and 159–160 contribute to the substrate site; these read RHGQSEWN, TG, ERDY, RR, and GN. The active-site Tele-phosphohistidine intermediate is the His-10. Glu-88 (proton donor/acceptor) is an active-site residue.

The protein belongs to the phosphoglycerate mutase family. BPG-dependent PGAM subfamily. Homodimer.

The enzyme catalyses (2R)-2-phosphoglycerate = (2R)-3-phosphoglycerate. Its pathway is carbohydrate degradation; glycolysis; pyruvate from D-glyceraldehyde 3-phosphate: step 3/5. Catalyzes the interconversion of 2-phosphoglycerate and 3-phosphoglycerate. The protein is 2,3-bisphosphoglycerate-dependent phosphoglycerate mutase of Bartonella quintana (strain Toulouse) (Rochalimaea quintana).